We begin with the raw amino-acid sequence, 115 residues long: NADH-ubiquinone oxidoreductase chain 3 (115 aa).

Helical transmembrane passes span 4-24 (LTVL…AFWL), 55-75 (FFLV…LLPL), and 87-107 (MMLT…YEWM).

Belongs to the complex I subunit 3 family. As to quaternary structure, core subunit of respiratory chain NADH dehydrogenase (Complex I) which is composed of 45 different subunits. Interacts with TMEM186. Interacts with TMEM242.

It is found in the mitochondrion inner membrane. It carries out the reaction a ubiquinone + NADH + 5 H(+)(in) = a ubiquinol + NAD(+) + 4 H(+)(out). Its function is as follows. Core subunit of the mitochondrial membrane respiratory chain NADH dehydrogenase (Complex I) which catalyzes electron transfer from NADH through the respiratory chain, using ubiquinone as an electron acceptor. Essential for the catalytic activity of complex I. The polypeptide is NADH-ubiquinone oxidoreductase chain 3 (Peromyscus slevini (Slevin's mouse)).